The chain runs to 159 residues: MSYSCSTRNCSSRRIGGEYAVPVVTVSSPEADCLSGIYLPSSFQTGSWLLDHCQETCCEPTVCQSTCYQPTPCVSSPVQVTSRQTTCVSSPCSTTCSRPLTFISSGCQPLSGVSTVCKPVRSISTVCQPVGGVSTICQPTCGVSRTYQQSCVSSCRRIC.

4 tandem repeats follow at residues Cys-107–Val-116, Cys-117–Val-126, Cys-127–Ile-136, and Cys-137–Thr-146. The segment at Cys-107 to Thr-146 is 4 X 10 AA approximate repeats.

This sequence belongs to the PMG family. Wool.

In terms of biological role, in the wool cortex, wool keratin intermediate filaments are embedded in an interfilamentous matrix, consisting of wool keratin-associated proteins (KRTAP), which are essential for the formation of a rigid and resistant wool shaft through their extensive disulfide bond cross-linking with abundant cysteine residues of wool keratins. The matrix proteins include the high-sulfur and high-glycine-tyrosine keratins. In Capra hircus (Goat), this protein is Keratin-associated protein 11-1 (KRTAP11-1).